Reading from the N-terminus, the 141-residue chain is Thioredoxin-like protein SkfH (141 aa).

A Thioredoxin domain is found at 2-141 (KDEQMLTEWP…DKMLKKIAGL (140 aa)). Residues cysteine 41 and cysteine 44 are joined by a disulfide bond.

Its function is as follows. Required for production of the bacteriocin SkfA. The protein is Thioredoxin-like protein SkfH of Bacillus subtilis (strain 168).